A 115-amino-acid chain; its full sequence is Alpha-endosulfine (115 aa).

Residues 1–10 show a composition bias toward polar residues; sequence MSSENLSDTQ. Residues 1-27 form a disordered region; it reads MSSENLSDTQMEYEDEKQDSQEKNANL. Ser-65 is subject to Phosphoserine; by GWL. The interval 77-115 is disordered; it reads NKQLPVAGPDKNLVTGDHIPTPQDLPQRRSSLVTSKLAG. Positions 104–115 are enriched in polar residues; that stretch reads RRSSLVTSKLAG.

The protein belongs to the endosulfine family. In terms of processing, phosphorylation at Ser-65 by gwl during mitosis is essential for interaction with ppp2r2d (PR55-delta) and subsequent inactivation of PP2A.

The protein resides in the cytoplasm. In terms of biological role, protein phosphatase inhibitor that specifically inhibits protein phosphatase 2A (PP2A) during mitosis. When phosphorylated at Ser-67 during mitosis, specifically interacts with ppp2r2d (PR55-delta) and inhibits its activity, leading to inactivation of PP2A, an essential condition to keep cyclin-B1-CDK1 activity high during M phase. The polypeptide is Alpha-endosulfine (ensa) (Salmo salar (Atlantic salmon)).